The chain runs to 442 residues: Methionine aminopeptidase 2-1 (442 aa).

The interval 1-92 (MAAQASEELE…ISELFPNNQY (92 aa)) is disordered. The span at 15–25 (NGQNGHAQEQV) shows a compositional bias: polar residues. Acidic residues predominate over residues 30–47 (EAADNDDSEDDEKEEEGG). Basic residues predominate over residues 56-72 (AKKKKKRKPKKKKKGGA). Histidine 195 contacts substrate. A divalent metal cation contacts are provided by aspartate 215, aspartate 226, and histidine 295. Histidine 303 contributes to the substrate binding site. 2 residues coordinate a divalent metal cation: glutamate 328 and glutamate 423.

The protein belongs to the peptidase M24A family. Methionine aminopeptidase eukaryotic type 2 subfamily. Co(2+) is required as a cofactor. The cofactor is Zn(2+). Mn(2+) serves as cofactor. Requires Fe(2+) as cofactor.

It localises to the cytoplasm. It catalyses the reaction Release of N-terminal amino acids, preferentially methionine, from peptides and arylamides.. Cotranslationally removes the N-terminal methionine from nascent proteins. The N-terminal methionine is often cleaved when the second residue in the primary sequence is small and uncharged (Met-Ala-, Cys, Gly, Pro, Ser, Thr, or Val). This is Methionine aminopeptidase 2-1 from Talaromyces marneffei (strain ATCC 18224 / CBS 334.59 / QM 7333) (Penicillium marneffei).